Here is a 568-residue protein sequence, read N- to C-terminus: Sulfite reductase [NADPH] hemoprotein beta-component (568 aa).

[4Fe-4S] cluster contacts are provided by Cys425, Cys431, Cys470, and Cys474. Cys474 provides a ligand contact to siroheme.

This sequence belongs to the nitrite and sulfite reductase 4Fe-4S domain family. As to quaternary structure, alpha(8)-beta(8). The alpha component is a flavoprotein, the beta component is a hemoprotein. It depends on siroheme as a cofactor. Requires [4Fe-4S] cluster as cofactor.

The catalysed reaction is hydrogen sulfide + 3 NADP(+) + 3 H2O = sulfite + 3 NADPH + 4 H(+). Its pathway is sulfur metabolism; hydrogen sulfide biosynthesis; hydrogen sulfide from sulfite (NADPH route): step 1/1. Its function is as follows. Component of the sulfite reductase complex that catalyzes the 6-electron reduction of sulfite to sulfide. This is one of several activities required for the biosynthesis of L-cysteine from sulfate. The protein is Sulfite reductase [NADPH] hemoprotein beta-component of Xanthomonas campestris pv. campestris (strain B100).